The chain runs to 426 residues: MMSTSRAVKSPACAARRRQWSADAPNRTATFLACRHGRRLGGGGGAPCSVRAEGSNTIGCLEAEAWGGAPALPGLRVAAPSPGDAFVVPSEQRVHEVVLRQAALAAAAPRTARIEPVPLDGGLKAAFHRCGEVCREYAKTFYLATQLMTPERRMAIWAIYVWCRRTDELVDGPNASHISALALDRWESRLEDIFAGRPYDMLDAALSDTVARFPVDIQPFRDMIEGMRMDLKKSRYRSFDELYLYCYYVAGTVGLMSVPVMGISPASRAATETVYKGALALGLANQLTNILRDVGEDARRGRIYLPQDELEMAGLSDADVLDGRVTDEWRGFMRGQIARARAFFRQAEEGATELNQESRWPVWSSLLLYRQILDEIEANDYDNFTRRAYVPKTKKLMALPKAYLRSLVVPSSSSQAESRRRYSTLT.

The N-terminal 52 residues, 1 to 52 (MMSTSRAVKSPACAARRRQWSADAPNRTATFLACRHGRRLGGGGGAPCSVRA), are a transit peptide targeting the chloroplast.

Belongs to the phytoene/squalene synthase family. Expressed in roots and endosperm.

Its subcellular location is the plastid. The protein localises to the chloroplast. The protein resides in the plastoglobule. The catalysed reaction is 2 (2E,6E,10E)-geranylgeranyl diphosphate = 15-cis-phytoene + 2 diphosphate. Its function is as follows. Catalyzes the conversion of geranylgeranyl diphosphate to phytoene. Mediates the first committed step in carotenoid biosynthesis. May play a role in regulating carotenoid flux in response to abiotic stress in roots. May control flux to carotenoid precursors that are required for abiotic stress-induced abscisic acid (ABA) formation in roots. This Zea mays (Maize) protein is Phytoene synthase 3, chloroplastic.